We begin with the raw amino-acid sequence, 300 residues long: Virginiamycin B lyase (300 aa).

Position 231 (histidine 231) interacts with substrate. Glutamate 270 provides a ligand contact to Mg(2+). Histidine 272 acts as the Proton acceptor in catalysis. Glutamate 287 serves as a coordination point for Mg(2+).

The protein belongs to the Vgb family. In terms of assembly, monomer. The cofactor is Mg(2+).

Its function is as follows. Inactivates the type B streptogramin antibiotics by linearizing the lactone ring at the ester linkage, generating a free phenylglycine carboxylate and converting the threonyl moiety into 2-amino-butenoic acid. This is Virginiamycin B lyase from Saccharopolyspora erythraea (strain ATCC 11635 / DSM 40517 / JCM 4748 / NBRC 13426 / NCIMB 8594 / NRRL 2338).